Consider the following 101-residue polypeptide: Synaptobrevin-B (101 aa).

The Cytoplasmic portion of the chain corresponds to 1–76 (MSNNPNNSGQ…RRQMWCRNMK (76 aa)). A v-SNARE coiled-coil homology domain is found at 13-73 (KTQSILQEVD…VTIRRQMWCR (61 aa)). The chain crosses the membrane as a helical; Anchor for type IV membrane protein span at residues 77 to 97 (LQLIIIAVVILVLAVILIPII). The Vesicular portion of the chain corresponds to 98-101 (MKFV).

This sequence belongs to the synaptobrevin family.

Its subcellular location is the cytoplasmic vesicle. The protein resides in the secretory vesicle membrane. Involved in the targeting and/or fusion of transport vesicles to their target membrane. The sequence is that of Synaptobrevin-B (sybB) from Dictyostelium discoideum (Social amoeba).